A 193-amino-acid polypeptide reads, in one-letter code: Orotate phosphoribosyltransferase (193 aa).

114 to 122 lines the 5-phospho-alpha-D-ribose 1-diphosphate pocket; sequence EDVITTGGS. T118 and R146 together coordinate orotate.

Belongs to the purine/pyrimidine phosphoribosyltransferase family. PyrE subfamily. Homodimer. Mg(2+) is required as a cofactor.

It carries out the reaction orotidine 5'-phosphate + diphosphate = orotate + 5-phospho-alpha-D-ribose 1-diphosphate. The protein operates within pyrimidine metabolism; UMP biosynthesis via de novo pathway; UMP from orotate: step 1/2. Catalyzes the transfer of a ribosyl phosphate group from 5-phosphoribose 1-diphosphate to orotate, leading to the formation of orotidine monophosphate (OMP). This is Orotate phosphoribosyltransferase from Chlorobium phaeobacteroides (strain DSM 266 / SMG 266 / 2430).